Here is a 435-residue protein sequence, read N- to C-terminus: Glutamate-1-semialdehyde 2,1-aminomutase (435 aa).

N6-(pyridoxal phosphate)lysine is present on K266.

Belongs to the class-III pyridoxal-phosphate-dependent aminotransferase family. HemL subfamily. In terms of assembly, homodimer. The cofactor is pyridoxal 5'-phosphate.

The protein localises to the cytoplasm. The enzyme catalyses (S)-4-amino-5-oxopentanoate = 5-aminolevulinate. It participates in porphyrin-containing compound metabolism; protoporphyrin-IX biosynthesis; 5-aminolevulinate from L-glutamyl-tRNA(Glu): step 2/2. This chain is Glutamate-1-semialdehyde 2,1-aminomutase, found in Coxiella burnetii (strain Dugway 5J108-111).